The sequence spans 782 residues: Host cell factor homolog hcf-1 (782 aa).

A disordered region spans residues 1 to 25; sequence MDEDVGLEATNYSRGDESRSEEQEK. The span at 14–25 shows a compositional bias: basic and acidic residues; that stretch reads RGDESRSEEQEK. 5 Kelch repeats span residues 55 to 103, 105 to 151, 161 to 222, 227 to 271, and 280 to 324; these read LIVI…SLGN, IYRF…RIGH, KAYV…IYEK, RMVV…PRSL, and KMFV…VPLH. 3 positions are modified to phosphoserine: serine 423, serine 431, and serine 449. The span at 423-434 shows a compositional bias: polar residues; that stretch reads SPIKRATTSPRK. The tract at residues 423-553 is disordered; it reads SPIKRATTSP…EENGDDDLPW (131 aa). Composition is skewed to polar residues over residues 456-469 and 496-513; these read TAPS…TTYT and TASP…SSTC. Serine 498 is subject to Phosphoserine. Residues 537–552 are compositionally biased toward acidic residues; that stretch reads GETDEMKEENGDDDLP.

In terms of assembly, interacts with daf-16/FOXO. Interacts with deacetylase sir-2.1. Interacts with the 14-3-3 family proteins ftt-2 and par-5. In terms of processing, phosphorylated at multiple serine residues. Phosphorylation is developmentally regulated, occurring in embryos but not L1 larvae. Phosphorylation may be cell-cycle-regulated.

It localises to the nucleus. Functionally, transcriptional coregulator. Involved in control of the cell cycle and in modulating mitotic histone phosphorylation. Plays a role in modulating lifespan by regulating the transcriptional activity of daf-16/Forkhead box protein O, in concert with protein deacetylase sir-2.1/SIRT1, and perhaps acting independently of the Insulin/IGF-1-like signaling (IIS) mediated pathway. Negatively modulates responses to environmental stresses, including oxidative stress, heat stress, and exposure to heavy metals; acting via regulation of the transcription factors daf-16 and skn-1. May play a role in pharyngeal development via positive modulation of expression of sup-35. This is Host cell factor homolog hcf-1 from Caenorhabditis elegans.